Consider the following 519-residue polypeptide: MATVPTYHDLSFYSNPKENKARYAKLLNSFEQKYHCKPDFFSRSPGRVNIIGEHIDYNYFSVLPMAIDVDVIVSVTTSDDAKVELNNTNPEFKEEILELPSDGAVIEINKTHHTWGNYFRCSMIVAHKYILEKYPELVSGGKKPLKGLKLIFDGNVPTGGGLSSSAAFCVASILAILKANGINTITKEDLVKISVVSEHYVGVNTGGMDQCASIYGEQNKALLVQFKPKLMATPFKMPVLKPHDMVFLISNTLVEANKQETALTNYNLRVVEMAVASEFLAKKFNLELPKESNLHTGTLRGFMDEYYEKHLKQPHWDGSDIDMGVQRMQEMLRLTEIMFSEEQKVGFKTEELAKELGLSVEEFTKVFLTKIPVKYERMKIYQRTVHVYSDAMRVLQVLKLFHQHKDSDDPQKFMLAFGRLLNDSQRSEDIYNNSSSPELREVCKISLANGGYGARTTGAGWGGSAVHLTTHDKLAKLVEALTEQYYKKQFPKITQSELNAAVVVSKPAAGSCIVQLAEY.

Residues arginine 47, glutamate 53, histidine 54, and aspartate 56 each coordinate alpha-D-galactose. ATP is bound by residues glycine 159, glycine 161, serine 163, and serine 164. An alpha-D-galactose-binding site is contributed by aspartate 209. Aspartate 209 functions as the Proton acceptor in the catalytic mechanism. Asparagine 257 and lysine 258 together coordinate ATP. Tyrosine 266 serves as a coordination point for alpha-D-galactose.

Belongs to the GHMP kinase family. GalK subfamily.

It catalyses the reaction alpha-D-galactose + ATP = alpha-D-galactose 1-phosphate + ADP + H(+). Its pathway is carbohydrate metabolism; galactose metabolism. Functionally, galactokinase is a key enzyme in the galactose metabolism where it catalyzes the conversion of alpha-D-galactose to galactose 1-phosphate. Can also induce the transcription of the gal genes in response to the organism being challenged with galactose as the sole source of carbon. The protein is Galactokinase (gal1) of Schizosaccharomyces pombe (strain 972 / ATCC 24843) (Fission yeast).